A 335-amino-acid polypeptide reads, in one-letter code: Acetyl-coenzyme A carboxylase carboxyl transferase subunit alpha (335 aa).

Residues 48-308 (VLESKVDALR…KSLLVEELRM (261 aa)) enclose the CoA carboxyltransferase C-terminal domain.

It belongs to the AccA family. Acetyl-CoA carboxylase is a heterohexamer composed of biotin carboxyl carrier protein (AccB), biotin carboxylase (AccC) and two subunits each of ACCase subunit alpha (AccA) and ACCase subunit beta (AccD).

It is found in the cytoplasm. The enzyme catalyses N(6)-carboxybiotinyl-L-lysyl-[protein] + acetyl-CoA = N(6)-biotinyl-L-lysyl-[protein] + malonyl-CoA. It functions in the pathway lipid metabolism; malonyl-CoA biosynthesis; malonyl-CoA from acetyl-CoA: step 1/1. Its function is as follows. Component of the acetyl coenzyme A carboxylase (ACC) complex. First, biotin carboxylase catalyzes the carboxylation of biotin on its carrier protein (BCCP) and then the CO(2) group is transferred by the carboxyltransferase to acetyl-CoA to form malonyl-CoA. The protein is Acetyl-coenzyme A carboxylase carboxyl transferase subunit alpha of Chlorobium phaeobacteroides (strain BS1).